The primary structure comprises 201 residues: NAD(P)H dehydrogenase (quinone) (201 aa).

Positions Val-4–Ile-192 constitute a Flavodoxin-like domain. FMN is bound by residues Ser-10–Val-15 and Thr-80–Phe-82. Residue Tyr-12 participates in NAD(+) binding. Trp-100 serves as a coordination point for substrate. FMN is bound by residues Ser-115–Gly-121 and His-136.

This sequence belongs to the WrbA family. FMN is required as a cofactor.

The enzyme catalyses a quinone + NADH + H(+) = a quinol + NAD(+). It catalyses the reaction a quinone + NADPH + H(+) = a quinol + NADP(+). The polypeptide is NAD(P)H dehydrogenase (quinone) (Chromohalobacter salexigens (strain ATCC BAA-138 / DSM 3043 / CIP 106854 / NCIMB 13768 / 1H11)).